The following is an 840-amino-acid chain: Exocyst complex component 7 (840 aa).

The interval 1-112 (MSAPPRLSAR…ATSTTSPFSY (112 aa)) is disordered. The span at 19–31 (SNAPSPTSPTGLK) shows a compositional bias: polar residues. Low complexity-rich tracts occupy residues 50–73 (KSSV…TLPK) and 83–111 (QQQQ…SPFS). Positions 193–227 (KNNATSELTEQDDQLENDKRDLQFIKEQLEKNNSM) form a coiled coil. The interval 601 to 638 (QDNNNSNSNSNAPSSTSSNSKSSSSSSSSSSSNSASST) is disordered. Residues 603 to 637 (NNNSNSNSNAPSSTSSNSKSSSSSSSSSSSNSASS) are compositionally biased toward low complexity.

This sequence belongs to the EXO70 family. The exocyst complex is composed of sec3/exoc1, sec5/exoc2, sec6/exoc3, sec8/exoc4, sec10/exoc5, sec15/exoc6, exo70/exoc7 and exo84/exoc8.

It is found in the cytoplasm. The protein resides in the cytosol. The protein localises to the cell membrane. It localises to the midbody. Its subcellular location is the midbody ring. In terms of biological role, component of the exocyst complex involved in the docking of exocytic vesicles with fusion sites on the plasma membrane. This Dictyostelium discoideum (Social amoeba) protein is Exocyst complex component 7 (exoc7).